The primary structure comprises 167 residues: Mediator of RNA polymerase II transcription subunit 10 (167 aa).

The segment covering 141-158 has biased composition (gly residues); the sequence is TGGRTVGGEGEGAGQGEG. A disordered region spans residues 141-167; that stretch reads TGGRTVGGEGEGAGQGEGGEGRGEGGN.

The protein belongs to the Mediator complex subunit 10 family. In terms of assembly, component of the Mediator complex.

Its subcellular location is the nucleus. In terms of biological role, component of the Mediator complex, a coactivator involved in the regulated transcription of nearly all RNA polymerase II-dependent genes. Mediator functions as a bridge to convey information from gene-specific regulatory proteins to the basal RNA polymerase II transcription machinery. Mediator is recruited to promoters by direct interactions with regulatory proteins and serves as a scaffold for the assembly of a functional preinitiation complex with RNA polymerase II and the general transcription factors. In Chaetomium globosum (strain ATCC 6205 / CBS 148.51 / DSM 1962 / NBRC 6347 / NRRL 1970) (Soil fungus), this protein is Mediator of RNA polymerase II transcription subunit 10 (NUT2).